The sequence spans 383 residues: Queuine tRNA-ribosyltransferase (383 aa).

Catalysis depends on D95, which acts as the Proton acceptor. Residues 95–99 (DSGGF), D149, Q195, and G222 contribute to the substrate site. An RNA binding region spans residues 253–259 (GVGSPDS). D272 acts as the Nucleophile in catalysis. Residues 277–281 (TRIAR) are RNA binding; important for wobble base 34 recognition. 4 residues coordinate Zn(2+): C310, C312, C315, and H341.

It belongs to the queuine tRNA-ribosyltransferase family. In terms of assembly, homodimer. Within each dimer, one monomer is responsible for RNA recognition and catalysis, while the other monomer binds to the replacement base PreQ1. Zn(2+) serves as cofactor.

It catalyses the reaction 7-aminomethyl-7-carbaguanine + guanosine(34) in tRNA = 7-aminomethyl-7-carbaguanosine(34) in tRNA + guanine. Its pathway is tRNA modification; tRNA-queuosine biosynthesis. Functionally, catalyzes the base-exchange of a guanine (G) residue with the queuine precursor 7-aminomethyl-7-deazaguanine (PreQ1) at position 34 (anticodon wobble position) in tRNAs with GU(N) anticodons (tRNA-Asp, -Asn, -His and -Tyr). Catalysis occurs through a double-displacement mechanism. The nucleophile active site attacks the C1' of nucleotide 34 to detach the guanine base from the RNA, forming a covalent enzyme-RNA intermediate. The proton acceptor active site deprotonates the incoming PreQ1, allowing a nucleophilic attack on the C1' of the ribose to form the product. After dissociation, two additional enzymatic reactions on the tRNA convert PreQ1 to queuine (Q), resulting in the hypermodified nucleoside queuosine (7-(((4,5-cis-dihydroxy-2-cyclopenten-1-yl)amino)methyl)-7-deazaguanosine). The chain is Queuine tRNA-ribosyltransferase from Shouchella clausii (strain KSM-K16) (Alkalihalobacillus clausii).